The sequence spans 669 residues: DNA mismatch repair protein MutL (669 aa).

Positions Phe-356–Ser-371 are enriched in basic and acidic residues. The disordered stretch occupies residues Phe-356–Pro-379.

This sequence belongs to the DNA mismatch repair MutL/HexB family.

This protein is involved in the repair of mismatches in DNA. It is required for dam-dependent methyl-directed DNA mismatch repair. May act as a 'molecular matchmaker', a protein that promotes the formation of a stable complex between two or more DNA-binding proteins in an ATP-dependent manner without itself being part of a final effector complex. This Staphylococcus aureus (strain MRSA252) protein is DNA mismatch repair protein MutL.